We begin with the raw amino-acid sequence, 174 residues long: Keratin-associated protein 1-5 (174 aa).

Residues 3–172 (CCQTSFCGYP…CCRPVCCCEP (170 aa)) form a 15 X 5 AA repeats of C-C-[QEPVRC]-[TPIVLE]-[SRHVP] region.

Belongs to the KRTAP type 1 family. In terms of assembly, interacts with hair keratins. Expressed in the middle/upper portions of the hair cortex, in the region termed the keratogenous zone.

Its function is as follows. In the hair cortex, hair keratin intermediate filaments are embedded in an interfilamentous matrix, consisting of hair keratin-associated proteins (KRTAP), which are essential for the formation of a rigid and resistant hair shaft through their extensive disulfide bond cross-linking with abundant cysteine residues of hair keratins. The matrix proteins include the high-sulfur and high-glycine-tyrosine keratins. This chain is Keratin-associated protein 1-5 (KRTAP1-5), found in Homo sapiens (Human).